Here is a 154-residue protein sequence, read N- to C-terminus: Myoglobin (154 aa).

Residues 2–148 form the Globin domain; sequence GLSEGEWQLV…FRKDIATKYK (147 aa). At S4 the chain carries Phosphoserine. H65 contributes to the nitrite binding site. H65 provides a ligand contact to O2. Position 68 is a phosphothreonine (T68). H94 lines the heme b pocket.

This sequence belongs to the globin family. In terms of assembly, monomeric.

The protein resides in the cytoplasm. The protein localises to the sarcoplasm. It carries out the reaction Fe(III)-heme b-[protein] + nitric oxide + H2O = Fe(II)-heme b-[protein] + nitrite + 2 H(+). The enzyme catalyses H2O2 + AH2 = A + 2 H2O. In terms of biological role, monomeric heme protein which primary function is to store oxygen and facilitate its diffusion within muscle tissues. Reversibly binds oxygen through a pentacoordinated heme iron and enables its timely and efficient release as needed during periods of heightened demand. Depending on the oxidative conditions of tissues and cells, and in addition to its ability to bind oxygen, it also has a nitrite reductase activity whereby it regulates the production of bioactive nitric oxide. Under stress conditions, like hypoxia and anoxia, it also protects cells against reactive oxygen species thanks to its pseudoperoxidase activity. This chain is Myoglobin (MB), found in Phocoenoides dalli dalli (Dall's porpoise).